Here is a 268-residue protein sequence, read N- to C-terminus: Imidazole glycerol phosphate synthase subunit HisF (268 aa).

Residues aspartate 12 and aspartate 131 contribute to the active site.

Belongs to the HisA/HisF family. As to quaternary structure, heterodimer of HisH and HisF.

The protein resides in the cytoplasm. The catalysed reaction is 5-[(5-phospho-1-deoxy-D-ribulos-1-ylimino)methylamino]-1-(5-phospho-beta-D-ribosyl)imidazole-4-carboxamide + L-glutamine = D-erythro-1-(imidazol-4-yl)glycerol 3-phosphate + 5-amino-1-(5-phospho-beta-D-ribosyl)imidazole-4-carboxamide + L-glutamate + H(+). It participates in amino-acid biosynthesis; L-histidine biosynthesis; L-histidine from 5-phospho-alpha-D-ribose 1-diphosphate: step 5/9. In terms of biological role, IGPS catalyzes the conversion of PRFAR and glutamine to IGP, AICAR and glutamate. The HisF subunit catalyzes the cyclization activity that produces IGP and AICAR from PRFAR using the ammonia provided by the HisH subunit. In Methanosphaerula palustris (strain ATCC BAA-1556 / DSM 19958 / E1-9c), this protein is Imidazole glycerol phosphate synthase subunit HisF.